Here is a 38-residue protein sequence, read N- to C-terminus: Large ribosomal subunit protein bL36 (38 aa).

Belongs to the bacterial ribosomal protein bL36 family.

The sequence is that of Large ribosomal subunit protein bL36 from Lacticaseibacillus casei (strain BL23) (Lactobacillus casei).